Reading from the N-terminus, the 264-residue chain is S-adenosylmethionine decarboxylase proenzyme (264 aa).

The active-site Schiff-base intermediate with substrate; via pyruvic acid is Ser-112. Pyruvic acid (Ser); by autocatalysis is present on Ser-112. His-117 serves as the catalytic Proton acceptor; for processing activity. Catalysis depends on Cys-140, which acts as the Proton donor; for catalytic activity.

This sequence belongs to the prokaryotic AdoMetDC family. Type 2 subfamily. As to quaternary structure, heterooctamer of four alpha and four beta chains arranged as a tetramer of alpha/beta heterodimers. It depends on pyruvate as a cofactor. Is synthesized initially as an inactive proenzyme. Formation of the active enzyme involves a self-maturation process in which the active site pyruvoyl group is generated from an internal serine residue via an autocatalytic post-translational modification. Two non-identical subunits are generated from the proenzyme in this reaction, and the pyruvate is formed at the N-terminus of the alpha chain, which is derived from the carboxyl end of the proenzyme. The post-translation cleavage follows an unusual pathway, termed non-hydrolytic serinolysis, in which the side chain hydroxyl group of the serine supplies its oxygen atom to form the C-terminus of the beta chain, while the remainder of the serine residue undergoes an oxidative deamination to produce ammonia and the pyruvoyl group blocking the N-terminus of the alpha chain.

It carries out the reaction S-adenosyl-L-methionine + H(+) = S-adenosyl 3-(methylsulfanyl)propylamine + CO2. It functions in the pathway amine and polyamine biosynthesis; S-adenosylmethioninamine biosynthesis; S-adenosylmethioninamine from S-adenosyl-L-methionine: step 1/1. Functionally, catalyzes the decarboxylation of S-adenosylmethionine to S-adenosylmethioninamine (dcAdoMet), the propylamine donor required for the synthesis of the polyamines spermine and spermidine from the diamine putrescine. This Salmonella agona (strain SL483) protein is S-adenosylmethionine decarboxylase proenzyme.